The sequence spans 142 residues: Large ribosomal subunit protein uL13 (142 aa).

It belongs to the universal ribosomal protein uL13 family. In terms of assembly, part of the 50S ribosomal subunit.

Functionally, this protein is one of the early assembly proteins of the 50S ribosomal subunit, although it is not seen to bind rRNA by itself. It is important during the early stages of 50S assembly. This is Large ribosomal subunit protein uL13 from Coxiella burnetii (strain CbuG_Q212) (Coxiella burnetii (strain Q212)).